The sequence spans 338 residues: MSKLFSEYKLKDVTLKNRIVMSPMCMYSVENKDGIATDFHFAHYVSRAAGGTGLVILEATAVQEVGRISEFDLGLWNDEQVPALKKLVDGLHYHGAKAGIQLAHAGRKAVLPGEIVAPSAIAFDEKSDKPVELTKEAIKEVVADFKRAAYRAKEAGFDVIEIHAAHGYLIHQFLSPITNRREDNYGGPAGNRYKILSDIIKAVKEVWDGPIIVRVSATDYAHGGLQLEDHIPFAKWMKADGVELIDVSTGGLVNVAPPVFPGYQVPFADEIRRGAGIATGALGLITRGEQAEEILCNERADLIIVGRELLRNPYFAKDAAKQLGETIEGPKQYSRAWK.

22–25 (SPMC) is a binding site for FMN. Tyr27 is a binding site for substrate. 2 residues coordinate FMN: Ala59 and Gln101. 163 to 166 (HAAH) lines the substrate pocket. FMN is bound by residues Arg214 and 306–307 (GR).

This sequence belongs to the NADH:flavin oxidoreductase/NADH oxidase family. NamA subfamily. As to quaternary structure, homotetramer. The cofactor is FMN.

The catalysed reaction is A + NADPH + H(+) = AH2 + NADP(+). In terms of biological role, catalyzes the reduction of the double bond of an array of alpha,beta-unsaturated aldehydes and ketones. It also reduces the nitro group of nitroester and nitroaromatic compounds. It could have a role in detoxification processes. This chain is NADPH dehydrogenase, found in Listeria monocytogenes serotype 4b (strain CLIP80459).